A 161-amino-acid polypeptide reads, in one-letter code: Nucleotide-binding protein Lferr_1091 (161 aa).

Belongs to the YajQ family.

In terms of biological role, nucleotide-binding protein. This Acidithiobacillus ferrooxidans (strain ATCC 53993 / BNL-5-31) (Leptospirillum ferrooxidans (ATCC 53993)) protein is Nucleotide-binding protein Lferr_1091.